An 869-amino-acid polypeptide reads, in one-letter code: Eukaryotic translation initiation factor 3 subunit C (869 aa).

Disordered regions lie at residues 1 to 92 and 182 to 242; these read MSRF…KSAK and IKKA…VGKG. Residues 14–55 are compositionally biased toward acidic residues; the sequence is SSDEEEDLYSDDEEVQEQPEEESSEDDSEEDDDDDDDSDSSS. Basic and acidic residues predominate over residues 185-203; sequence ASKEHQKDIDSFRADKDAY. In terms of domain architecture, PCI spans 607–781; the sequence is FHMHINLELL…SSIIFRKGVE (175 aa). The tract at residues 803–869 is disordered; sequence NERTLETRTQ…ALGAAVGSRA (67 aa). Positions 823 to 843 are enriched in gly residues; that stretch reads GRGGRGGNRGGRGGGRGGRGG.

The protein belongs to the eIF-3 subunit C family. Component of the eukaryotic translation initiation factor 3 (eIF-3) complex.

Its subcellular location is the cytoplasm. Functionally, component of the eukaryotic translation initiation factor 3 (eIF-3) complex, which is involved in protein synthesis of a specialized repertoire of mRNAs and, together with other initiation factors, stimulates binding of mRNA and methionyl-tRNAi to the 40S ribosome. The eIF-3 complex specifically targets and initiates translation of a subset of mRNAs involved in cell proliferation. The protein is Eukaryotic translation initiation factor 3 subunit C (nip1) of Botryotinia fuckeliana (strain B05.10) (Noble rot fungus).